The sequence spans 334 residues: Magnesium-chelatase 38 kDa subunit (334 aa).

36-43 contributes to the ATP binding site; that stretch reads GDRGTGKS.

Belongs to the Mg-chelatase subunits D/I family.

It carries out the reaction protoporphyrin IX + Mg(2+) + ATP + H2O = Mg-protoporphyrin IX + ADP + phosphate + 3 H(+). It functions in the pathway porphyrin-containing compound metabolism; bacteriochlorophyll biosynthesis. Functionally, involved in bacteriochlorophyll biosynthesis; introduces a magnesium ion into protoporphyrin IX to yield Mg-protoporphyrin IX. This is Magnesium-chelatase 38 kDa subunit (bchI) from Cereibacter sphaeroides (strain ATCC 17023 / DSM 158 / JCM 6121 / CCUG 31486 / LMG 2827 / NBRC 12203 / NCIMB 8253 / ATH 2.4.1.) (Rhodobacter sphaeroides).